Reading from the N-terminus, the 79-residue chain is Serine protease inhibitor Kazal-type 1 (79 aa).

An N-terminal signal peptide occupies residues 1–23 (MKVASIFLLTALVLMSLSGNSGA). Residues 26–79 (LGREAKCTNEVNGCPRIYNPVCGTDGVTYSNECLLCMENKERQTPVLIQKSGPC) enclose the Kazal-like domain. 3 cysteine pairs are disulfide-bonded: C32–C61, C39–C58, and C47–C79.

It localises to the secreted. Serine protease inhibitor which exhibits anti-trypsin activity. In the pancreas, protects against trypsin-catalyzed premature activation of zymogens. Functionally, in the male reproductive tract, binds to sperm heads where it modulates sperm capacitance by inhibiting calcium uptake and nitrogen oxide (NO) production. The protein is Serine protease inhibitor Kazal-type 1 (SPINK1) of Bos taurus (Bovine).